The chain runs to 587 residues: ATF/CREB activator 2 (587 aa).

4 disordered regions span residues M1–L62, L123–S144, N169–A195, and T381–T423. Over residues K16–S29 the composition is skewed to basic and acidic residues. 2 stretches are compositionally biased toward low complexity: residues S39–A57 and L123–Q134. Phosphoserine is present on residues S171 and S179. Positions N385–H395 are enriched in basic and acidic residues. A compositionally biased stretch (polar residues) spans S396 to N418. Position 399 is a phosphoserine (S399). In terms of domain architecture, bZIP spans A425–H488. The segment at K427–K447 is basic motif. Residues L453–L467 form a leucine-zipper region. The segment at S552–K587 is disordered. S557 carries the phosphoserine modification. The residue at position 559 (T559) is a Phosphothreonine. The span at D565–D576 shows a compositional bias: basic and acidic residues. Residues N577–K587 show a composition bias toward polar residues.

Belongs to the bZIP family.

Its subcellular location is the nucleus. Its function is as follows. Transcriptional activator of promoters containing ATF/CREB sites. Can independently stimulate transcription through ATF/CREB sites. Important for a variety of biological functions including growth on non-optimal carbon sources. The chain is ATF/CREB activator 2 (CST6) from Saccharomyces cerevisiae (strain ATCC 204508 / S288c) (Baker's yeast).